Consider the following 291-residue polypeptide: Glycine--tRNA ligase alpha subunit (291 aa).

It belongs to the class-II aminoacyl-tRNA synthetase family. In terms of assembly, tetramer of two alpha and two beta subunits.

It is found in the cytoplasm. It carries out the reaction tRNA(Gly) + glycine + ATP = glycyl-tRNA(Gly) + AMP + diphosphate. The sequence is that of Glycine--tRNA ligase alpha subunit from Microcystis aeruginosa (strain NIES-843 / IAM M-2473).